Here is a 226-residue protein sequence, read N- to C-terminus: Ribonuclease 3 (226 aa).

The RNase III domain occupies isoleucine 6–aspartate 128. Mg(2+) is bound at residue glutamate 41. Aspartate 45 is a catalytic residue. Residues aspartate 114 and glutamate 117 each contribute to the Mg(2+) site. The active site involves glutamate 117. Residues aspartate 155–isoleucine 225 form the DRBM domain.

It belongs to the ribonuclease III family. As to quaternary structure, homodimer. It depends on Mg(2+) as a cofactor.

Its subcellular location is the cytoplasm. It carries out the reaction Endonucleolytic cleavage to 5'-phosphomonoester.. Functionally, digests double-stranded RNA. Involved in the processing of primary rRNA transcript to yield the immediate precursors to the large and small rRNAs (23S and 16S). Processes some mRNAs, and tRNAs when they are encoded in the rRNA operon. Processes pre-crRNA and tracrRNA of type II CRISPR loci if present in the organism. The chain is Ribonuclease 3 from Erwinia tasmaniensis (strain DSM 17950 / CFBP 7177 / CIP 109463 / NCPPB 4357 / Et1/99).